Consider the following 99-residue polypeptide: Large ribosomal subunit protein eL21 (99 aa).

It belongs to the eukaryotic ribosomal protein eL21 family.

The chain is Large ribosomal subunit protein eL21 from Ignicoccus hospitalis (strain KIN4/I / DSM 18386 / JCM 14125).